The sequence spans 287 residues: Nucleotide-binding protein Ajs_0902 (287 aa).

Residue Gly10–Ser17 coordinates ATP. Asp59–Ser62 is a binding site for GTP.

Belongs to the RapZ-like family.

In terms of biological role, displays ATPase and GTPase activities. This chain is Nucleotide-binding protein Ajs_0902, found in Acidovorax sp. (strain JS42).